The sequence spans 164 residues: Transcription antitermination protein NusB (164 aa).

This sequence belongs to the NusB family.

Its function is as follows. Involved in transcription antitermination. Required for transcription of ribosomal RNA (rRNA) genes. Binds specifically to the boxA antiterminator sequence of the ribosomal RNA (rrn) operons. This chain is Transcription antitermination protein NusB, found in Chlorobium limicola (strain DSM 245 / NBRC 103803 / 6330).